The sequence spans 261 residues: Aminoglycoside N(3)-acetyltransferase IV (261 aa).

This sequence belongs to the antibiotic N-acetyltransferase family.

It carries out the reaction a 2-deoxystreptamine antibiotic + acetyl-CoA = an N(3)-acetyl-2-deoxystreptamine antibiotic + CoA + H(+). Functionally, resistance to antibiotics containing the 2-deoxy-streptamine ring including gentamicin, kanamycin, tobramycin, neomycin and apramycin. The polypeptide is Aminoglycoside N(3)-acetyltransferase IV (aacC4) (Salmonella sp).